The primary structure comprises 577 residues: Endopolyphosphatase (577 aa).

The Cytoplasmic segment spans residues 1–2 (MR). A helical; Signal-anchor for type II membrane protein transmembrane segment spans residues 3 to 23 (PSVITVAVLFVQSTWASFAFG). Residues 24–577 (NPMSMRNKAH…YIGSISDFED (554 aa)) are Vacuolar-facing. 4 N-linked (GlcNAc...) asparagine glycosylation sites follow: Asn363, Asn370, Asn375, and Asn399. The tract at residues 430 to 460 (SDYEIDKKKKKKKKNNKKKKKNKRKNIKPGP) is disordered. Over residues 437 to 456 (KKKKKKKNNKKKKKNKRKNI) the composition is skewed to basic residues. Asn481 carries an N-linked (GlcNAc...) asparagine glycan.

Belongs to the endopolyphosphatase PPN1 family. Requires a divalent metal cation as cofactor. Post-translationally, processing by proteases in the vacuole may be required for activation.

Its subcellular location is the vacuole membrane. The catalysed reaction is [phosphate](n+1) + n H2O = (n+1) phosphate + n H(+). In terms of biological role, catalyzes the hydrolysis of inorganic polyphosphate (polyP) chains of many hundreds of phosphate residues into shorter lengths. The sequence is that of Endopolyphosphatase (ppn1) from Schizosaccharomyces pombe (strain 972 / ATCC 24843) (Fission yeast).